The primary structure comprises 250 residues: 2,3-bisphosphoglycerate-dependent phosphoglycerate mutase (250 aa).

Substrate-binding positions include 10-17, 23-24, arginine 62, 89-92, lysine 100, 116-117, and 185-186; these read RHGESQWN, TG, ERHY, RR, and GN. The active-site Tele-phosphohistidine intermediate is histidine 11. Glutamate 89 functions as the Proton donor/acceptor in the catalytic mechanism.

Belongs to the phosphoglycerate mutase family. BPG-dependent PGAM subfamily. Homodimer.

It catalyses the reaction (2R)-2-phosphoglycerate = (2R)-3-phosphoglycerate. It functions in the pathway carbohydrate degradation; glycolysis; pyruvate from D-glyceraldehyde 3-phosphate: step 3/5. Its function is as follows. Catalyzes the interconversion of 2-phosphoglycerate and 3-phosphoglycerate. The polypeptide is 2,3-bisphosphoglycerate-dependent phosphoglycerate mutase (Pectobacterium atrosepticum (strain SCRI 1043 / ATCC BAA-672) (Erwinia carotovora subsp. atroseptica)).